A 585-amino-acid polypeptide reads, in one-letter code: S-antigen protein (585 aa).

The first 23 residues, 1-23, serve as a signal peptide directing secretion; the sequence is MNRILSVTLCLFFIYLYIYKTYG. Residues 51 to 585 are disordered; that stretch reads NGKGQKYEDL…NSIINMLIGM (535 aa). The span at 59 to 85 shows a compositional bias: acidic residues; it reads DLEEEKEGENDDEEDSNSEESNNDEEN. Residues 96–113 show a composition bias toward basic and acidic residues; that stretch reads QETHGSEDEVSNGREDKV. 56 consecutive repeat copies span residues 102-109, 110-117, 118-125, 126-133, 134-141, 142-149, 150-157, 158-165, 166-173, 174-181, 182-189, 190-197, 198-205, 206-213, 214-221, 222-229, 230-237, 238-245, 246-253, 254-261, 262-269, 270-277, 278-285, 286-293, 294-301, 302-309, 310-317, 318-325, 326-333, 334-341, 342-349, 350-357, 358-365, 366-373, 374-381, 382-389, 390-397, 398-405, 406-413, 414-421, 422-429, 430-437, 438-445, 446-453, 454-461, 462-469, 470-477, 478-485, 486-493, 494-501, 502-509, 510-517, 518-525, 526-533, 534-541, and 542-549. A 56 X 8 AA tandem repeats of E-D-[EK]-V-S-N-G-[RG] region spans residues 102 to 549; that stretch reads EDEVSNGRED…GREDEVSNGR (448 aa). Residues 117–129 are compositionally biased toward acidic residues; it reads GEDEVSNGGEDEV. 2 stretches are compositionally biased toward basic and acidic residues: residues 194–209 and 218–233; these read SNGREDKVSNGREDKV. A compositionally biased stretch (basic and acidic residues) spans 274–297; sequence SNGREDKVSNGREDEVSNGREDKV. Positions 322-337 are enriched in basic and acidic residues; it reads SNGREDKVSNGREDKV. Basic and acidic residues-rich tracts occupy residues 362–393 and 402–417; these read SNGREDKVSNGREDKVSNGREDEVSNGREDKV and SNGREDKVSNGREDKV. Basic and acidic residues predominate over residues 442–465; sequence SNGREDKVSNGREDKVSNGREDKV. Residues 469–481 are compositionally biased toward acidic residues; it reads GEDEVSNGGEDEV. 2 stretches are compositionally biased toward basic and acidic residues: residues 530-553 and 560-569; these read SNGREDKVSNGREDEVSNGREDKG and ELSHNSESHT. The span at 576–585 shows a compositional bias: low complexity; sequence NSIINMLIGM.

The protein localises to the parasitophorous vacuole. Its function is as follows. S antigens are soluble heat-stable proteins present in the sera of some infected individuals. In Plasmodium falciparum (isolate 3D7), this protein is S-antigen protein.